The following is a 563-amino-acid chain: Arginine--tRNA ligase (563 aa).

A 'HIGH' region motif is present at residues P121–H131.

It belongs to the class-I aminoacyl-tRNA synthetase family. Monomer.

It is found in the cytoplasm. The enzyme catalyses tRNA(Arg) + L-arginine + ATP = L-arginyl-tRNA(Arg) + AMP + diphosphate. The protein is Arginine--tRNA ligase of Streptococcus pneumoniae (strain CGSP14).